Reading from the N-terminus, the 240-residue chain is 2,3,4,5-tetrahydropyridine-2,6-dicarboxylate N-acetyltransferase (240 aa).

Belongs to the transferase hexapeptide repeat family. DapH subfamily.

It carries out the reaction (S)-2,3,4,5-tetrahydrodipicolinate + acetyl-CoA + H2O = L-2-acetamido-6-oxoheptanedioate + CoA. It participates in amino-acid biosynthesis; L-lysine biosynthesis via DAP pathway; LL-2,6-diaminopimelate from (S)-tetrahydrodipicolinate (acetylase route): step 1/3. Its function is as follows. Catalyzes the transfer of an acetyl group from acetyl-CoA to tetrahydrodipicolinate. The chain is 2,3,4,5-tetrahydropyridine-2,6-dicarboxylate N-acetyltransferase from Shouchella clausii (strain KSM-K16) (Alkalihalobacillus clausii).